The chain runs to 192 residues: uncharacterized protein (192 aa).

To M.thermoautotrophicum MTH863.

This is an uncharacterized protein from Methanocaldococcus jannaschii (strain ATCC 43067 / DSM 2661 / JAL-1 / JCM 10045 / NBRC 100440) (Methanococcus jannaschii).